The chain runs to 331 residues: 4-hydroxy-3-methylbut-2-enyl diphosphate reductase (331 aa).

Cys12 contacts [4Fe-4S] cluster. Positions 43 and 81 each coordinate (2E)-4-hydroxy-3-methylbut-2-enyl diphosphate. Residues His43 and His81 each contribute to the dimethylallyl diphosphate site. Isopentenyl diphosphate is bound by residues His43 and His81. Position 103 (Cys103) interacts with [4Fe-4S] cluster. A (2E)-4-hydroxy-3-methylbut-2-enyl diphosphate-binding site is contributed by His131. His131 is a binding site for dimethylallyl diphosphate. Residue His131 participates in isopentenyl diphosphate binding. Glu133 (proton donor) is an active-site residue. Thr170 is a (2E)-4-hydroxy-3-methylbut-2-enyl diphosphate binding site. Cys198 lines the [4Fe-4S] cluster pocket. (2E)-4-hydroxy-3-methylbut-2-enyl diphosphate-binding residues include Ser226, Asn228, and Ser271. Dimethylallyl diphosphate contacts are provided by Ser226, Asn228, and Ser271. 3 residues coordinate isopentenyl diphosphate: Ser226, Asn228, and Ser271.

Belongs to the IspH family. Requires [4Fe-4S] cluster as cofactor.

The enzyme catalyses isopentenyl diphosphate + 2 oxidized [2Fe-2S]-[ferredoxin] + H2O = (2E)-4-hydroxy-3-methylbut-2-enyl diphosphate + 2 reduced [2Fe-2S]-[ferredoxin] + 2 H(+). It catalyses the reaction dimethylallyl diphosphate + 2 oxidized [2Fe-2S]-[ferredoxin] + H2O = (2E)-4-hydroxy-3-methylbut-2-enyl diphosphate + 2 reduced [2Fe-2S]-[ferredoxin] + 2 H(+). The protein operates within isoprenoid biosynthesis; dimethylallyl diphosphate biosynthesis; dimethylallyl diphosphate from (2E)-4-hydroxy-3-methylbutenyl diphosphate: step 1/1. It participates in isoprenoid biosynthesis; isopentenyl diphosphate biosynthesis via DXP pathway; isopentenyl diphosphate from 1-deoxy-D-xylulose 5-phosphate: step 6/6. Its function is as follows. Catalyzes the conversion of 1-hydroxy-2-methyl-2-(E)-butenyl 4-diphosphate (HMBPP) into a mixture of isopentenyl diphosphate (IPP) and dimethylallyl diphosphate (DMAPP). Acts in the terminal step of the DOXP/MEP pathway for isoprenoid precursor biosynthesis. The polypeptide is 4-hydroxy-3-methylbut-2-enyl diphosphate reductase (Listeria monocytogenes serotype 4b (strain CLIP80459)).